A 202-amino-acid polypeptide reads, in one-letter code: Large ribosomal subunit protein bL25 (202 aa).

Belongs to the bacterial ribosomal protein bL25 family. CTC subfamily. Part of the 50S ribosomal subunit; part of the 5S rRNA/L5/L18/L25 subcomplex. Contacts the 5S rRNA. Binds to the 5S rRNA independently of L5 and L18.

In terms of biological role, this is one of the proteins that binds to the 5S RNA in the ribosome where it forms part of the central protuberance. The chain is Large ribosomal subunit protein bL25 from Methylococcus capsulatus (strain ATCC 33009 / NCIMB 11132 / Bath).